Consider the following 938-residue polypeptide: Scm-like with four MBT domains protein 2 (938 aa).

Residues 1–32 (MERYLPVSKKRNSSSSLEKITGSANGNGTLYS) are disordered. The segment covering 13–30 (SSSSLEKITGSANGNGTL) has biased composition (polar residues). 4 MBT repeats span residues 43–143 (FSWG…LRPP), 151–255 (SDWT…MDPP), 265–371 (FEWK…LAPP), and 379–475 (FNWV…LTTP). The segment at 742–836 (PEGIPESLPE…TVPTTASSNN (95 aa)) is disordered. 2 stretches are compositionally biased toward basic and acidic residues: residues 765–777 (TEQEKRETLDTAR) and 809–822 (RNSEALKRPPVERA). Positions 868–931 (WSVTDVVRFI…CHQIERVKVA (64 aa)) constitute an SAM domain.

As to quaternary structure, interacts with YY1. Interacts with methylated histones H3K9me2 and H4K20me2. As to expression, expressed in testis and, at much lower levels, in ovary.

Its subcellular location is the nucleus. Transcriptional repressor of HOXB13 gene. This Mus musculus (Mouse) protein is Scm-like with four MBT domains protein 2 (Sfmbt2).